Here is a 133-residue protein sequence, read N- to C-terminus: Interleukin-4 (133 aa).

Positions 1–24 (MGLTSQLIPTLVCLLACTSNFVHG) are cleaved as a signal peptide. Cystine bridges form between Cys27-Cys133, Cys48-Cys85, and Cys70-Cys105. The N-linked (GlcNAc...) asparagine glycan is linked to Asn62.

It belongs to the IL-4/IL-13 family.

It localises to the secreted. Functionally, participates in at least several B-cell activation processes as well as of other cell types. It is a costimulator of DNA-synthesis. It induces the expression of class II MHC molecules on resting B-cells. It enhances both secretion and cell surface expression of IgE and IgG1. It also regulates the expression of the low affinity Fc receptor for IgE (CD23) on both lymphocytes and monocytes. Positively regulates IL31RA expression in macrophages. Stimulates autophagy in dendritic cells by interfering with mTORC1 signaling and through the induction of RUFY4. This is Interleukin-4 (IL4) from Sus scrofa (Pig).